The chain runs to 451 residues: Cytosolic Fe-S cluster assembly factor NAR1 (451 aa).

Positions 20, 56, 59, 62, 166, 213, 382, and 386 each coordinate [4Fe-4S] cluster.

It belongs to the NARF family.

In terms of biological role, component of the cytosolic Fe/S protein assembly machinery. Required for maturation of extramitochondrial Fe/S proteins. May play a role in the transfer of pre-assembled Fe/S clusters to target apoproteins. This is Cytosolic Fe-S cluster assembly factor NAR1 (NAR1) from Eremothecium gossypii (strain ATCC 10895 / CBS 109.51 / FGSC 9923 / NRRL Y-1056) (Yeast).